We begin with the raw amino-acid sequence, 324 residues long: MKNAKMIGFGLYTPKNLVENERLQEFLETSDEWIRTRTGIERRYISLDENTSDLAVEASKKALNQAGLSAEDIDLIILATVTPDNFTPSTACIVQDKLGAKNAWAFDINAACTGFIYALKLGRSLIRSGEAKNALIIGAETLSKALNWEDRGSCVLFGDGAGATVLTSTEEDCGIKCVNVKSDGSKGDSLVIQGLPLNSPFKDGREVSENYINMNGREIFKFATKVMEESIVEILEKENIKIEDIDAIIPHQANLRIIDYVVKRLGIPREKFITNLQNYGNTSGASIPIALCESINEGNLKKGDNIIMVGFGGGLTWGAALIKL.

Residues Cys112 and His251 contribute to the active site. The interval 252–256 (QANLR) is ACP-binding. Residue Asn281 is part of the active site.

This sequence belongs to the thiolase-like superfamily. FabH family. As to quaternary structure, homodimer.

The protein resides in the cytoplasm. It catalyses the reaction malonyl-[ACP] + acetyl-CoA + H(+) = 3-oxobutanoyl-[ACP] + CO2 + CoA. The protein operates within lipid metabolism; fatty acid biosynthesis. Catalyzes the condensation reaction of fatty acid synthesis by the addition to an acyl acceptor of two carbons from malonyl-ACP. Catalyzes the first condensation reaction which initiates fatty acid synthesis and may therefore play a role in governing the total rate of fatty acid production. Possesses both acetoacetyl-ACP synthase and acetyl transacylase activities. Its substrate specificity determines the biosynthesis of branched-chain and/or straight-chain of fatty acids. This Clostridium perfringens (strain ATCC 13124 / DSM 756 / JCM 1290 / NCIMB 6125 / NCTC 8237 / Type A) protein is Beta-ketoacyl-[acyl-carrier-protein] synthase III.